Here is a 448-residue protein sequence, read N- to C-terminus: Cytoplasmic tRNA 2-thiolation protein 2 (448 aa).

The protein belongs to the CTU2/NCS2 family.

The protein resides in the cytoplasm. Its pathway is tRNA modification; 5-methoxycarbonylmethyl-2-thiouridine-tRNA biosynthesis. Functionally, plays a central role in 2-thiolation of mcm(5)S(2)U at tRNA wobble positions of tRNA(Lys), tRNA(Glu) and tRNA(Gln). May act by forming a heterodimer with NCS6 that ligates sulfur from thiocarboxylated URM1 onto the uridine of tRNAs at wobble position. Prior mcm(5) tRNA modification by the elongator complex is required for 2-thiolation. May also be involved in protein urmylation. This chain is Cytoplasmic tRNA 2-thiolation protein 2, found in Debaryomyces hansenii (strain ATCC 36239 / CBS 767 / BCRC 21394 / JCM 1990 / NBRC 0083 / IGC 2968) (Yeast).